We begin with the raw amino-acid sequence, 264 residues long: tRNA pseudouridine synthase A (264 aa).

Asp51 (nucleophile) is an active-site residue. Tyr109 is a binding site for substrate.

It belongs to the tRNA pseudouridine synthase TruA family. In terms of assembly, homodimer.

The enzyme catalyses uridine(38/39/40) in tRNA = pseudouridine(38/39/40) in tRNA. Its function is as follows. Formation of pseudouridine at positions 38, 39 and 40 in the anticodon stem and loop of transfer RNAs. This chain is tRNA pseudouridine synthase A, found in Yersinia pseudotuberculosis serotype O:1b (strain IP 31758).